A 245-amino-acid polypeptide reads, in one-letter code: Phosphoadenosine 5'-phosphosulfate reductase (245 aa).

The active-site Nucleophile; cysteine thiosulfonate intermediate is the C239.

It belongs to the PAPS reductase family. CysH subfamily.

It localises to the cytoplasm. The enzyme catalyses [thioredoxin]-disulfide + sulfite + adenosine 3',5'-bisphosphate + 2 H(+) = [thioredoxin]-dithiol + 3'-phosphoadenylyl sulfate. It participates in sulfur metabolism; hydrogen sulfide biosynthesis; sulfite from sulfate: step 3/3. Functionally, catalyzes the formation of sulfite from phosphoadenosine 5'-phosphosulfate (PAPS) using thioredoxin as an electron donor. This chain is Phosphoadenosine 5'-phosphosulfate reductase, found in Baumannia cicadellinicola subsp. Homalodisca coagulata.